A 524-amino-acid chain; its full sequence is Putative ATP-dependent RNA helicase R458 (524 aa).

Positions 125–338 (VPELIQRKDT…NSYFRKYSPI (214 aa)) constitute a Helicase ATP-binding domain. ATP is bound at residue 138-145 (FKSGTGKT). The DEFD box motif lies at 268-271 (DEFD). One can recognise a Helicase C-terminal domain in the interval 373-524 (IILDLLKQCR…QLPGDLSTLL (152 aa)).

It belongs to the DEAD box helicase family. eIF4A subfamily.

It catalyses the reaction ATP + H2O = ADP + phosphate + H(+). In terms of biological role, putative ATP-dependent RNA helicase. This Acanthamoeba polyphaga mimivirus (APMV) protein is Putative ATP-dependent RNA helicase R458.